We begin with the raw amino-acid sequence, 1014 residues long: Endogenous retrovirus group K member 10 Pol protein (1014 aa).

The Reverse transcriptase domain maps to 57–245; sequence LEKGHIEPSF…TPFHYLGMQI (189 aa). Positions 161-164 match the LPQG motif; that stretch reads LPQG. The short motif at 195 to 198 is the YXDD element; the sequence is YIDD. One can recognise an RNase H type-1 domain in the interval 460-590; the sequence is LENALTVFTD…ADLLVSSALI (131 aa). Residues Asp469, Glu497, Asp517, and Asp582 each contribute to the Mg(2+) site. An Integrase-type zinc finger spans residues 587 to 628; the sequence is SALIKAQELHALTHVNAAGLKNKFDVTWKQAKDIVQHCTQCQ. Positions 596, 600, 624, and 627 each coordinate Zn(2+). The Integrase catalytic domain occupies 642–803; that stretch reads RGLCPNALWQ…TSAEQHLTGK (162 aa). The integrase-type DNA-binding region spans 811-859; that stretch reads KLIWWKDNKNKTWEIGKVITWGRGFACVSPGENQLPVWLPTRHLKFYNE.

This sequence belongs to the beta type-B retroviral polymerase family. HERV class-II K(HML-2) pol subfamily.

It carries out the reaction DNA(n) + a 2'-deoxyribonucleoside 5'-triphosphate = DNA(n+1) + diphosphate. The enzyme catalyses Endonucleolytic cleavage to 5'-phosphomonoester.. Functionally, early post-infection, the reverse transcriptase converts the viral RNA genome into double-stranded viral DNA. The RNase H domain of the reverse transcriptase performs two functions. It degrades the RNA template and specifically removes the RNA primer from the RNA/DNA hybrid. Following nuclear import, the integrase catalyzes the insertion of the linear, double-stranded viral DNA into the host cell chromosome. Endogenous Pol proteins may have kept, lost or modified their original function during evolution. The protein is Endogenous retrovirus group K member 10 Pol protein (ERVK-10) of Homo sapiens (Human).